We begin with the raw amino-acid sequence, 494 residues long: Alpha-amylase-related protein (494 aa).

An N-terminal signal peptide occupies residues 1–20; that stretch reads MIKFALALTLCLAGASLSLA. Gln21 is subject to Pyrrolidone carboxylic acid. Cys48 and Cys104 form a disulfide bridge. Positions 118, 169, and 178 each coordinate Ca(2+). Cys157 and Cys171 form a disulfide bridge. A chloride-binding site is contributed by Arg206. Asp208 serves as the catalytic Nucleophile. Position 212 (His212) interacts with Ca(2+). Glu245 (proton donor) is an active-site residue. Residues Asn308 and Arg343 each contribute to the chloride site. Intrachain disulfides connect Cys376–Cys382, Cys418–Cys441, and Cys448–Cys460.

Belongs to the glycosyl hydrolase 13 family. As to quaternary structure, monomer. Ca(2+) is required as a cofactor. Chloride serves as cofactor.

It is found in the secreted. It carries out the reaction Endohydrolysis of (1-&gt;4)-alpha-D-glucosidic linkages in polysaccharides containing three or more (1-&gt;4)-alpha-linked D-glucose units.. This chain is Alpha-amylase-related protein (Amyrel), found in Drosophila bakoue (Fruit fly).